A 297-amino-acid polypeptide reads, in one-letter code: Protoheme IX farnesyltransferase (297 aa).

8 consecutive transmembrane segments (helical) span residues 15–35 (VVAL…PAPY), 39–59 (GLLV…AAVF), 91–111 (VWGV…VNII), 112–132 (TVVL…LYLK), 139–159 (IVIG…AVSG), 166–186 (ACLL…ALAI), 220–240 (LLLV…YLVI), and 265–285 (AWST…ALLF).

The protein belongs to the UbiA prenyltransferase family. Protoheme IX farnesyltransferase subfamily.

It localises to the cell inner membrane. The enzyme catalyses heme b + (2E,6E)-farnesyl diphosphate + H2O = Fe(II)-heme o + diphosphate. Its pathway is porphyrin-containing compound metabolism; heme O biosynthesis; heme O from protoheme: step 1/1. In terms of biological role, converts heme B (protoheme IX) to heme O by substitution of the vinyl group on carbon 2 of heme B porphyrin ring with a hydroxyethyl farnesyl side group. This Vesicomyosocius okutanii subsp. Calyptogena okutanii (strain HA) protein is Protoheme IX farnesyltransferase.